The chain runs to 122 residues: Large ribosomal subunit protein uL14c (122 aa).

Belongs to the universal ribosomal protein uL14 family. Part of the 50S ribosomal subunit.

The protein localises to the plastid. The protein resides in the chloroplast. In terms of biological role, binds to 23S rRNA. The protein is Large ribosomal subunit protein uL14c of Tupiella akineta (Green alga).